The primary structure comprises 647 residues: 1-deoxy-D-xylulose-5-phosphate synthase (647 aa).

Thiamine diphosphate is bound by residues His-88 and 129–131; that span reads GHA. Residue Asp-160 coordinates Mg(2+). Residues 161–162, Asn-189, Tyr-300, and Glu-377 each bind thiamine diphosphate; that span reads GA. Position 189 (Asn-189) interacts with Mg(2+).

It belongs to the transketolase family. DXPS subfamily. In terms of assembly, homodimer. Mg(2+) serves as cofactor. Thiamine diphosphate is required as a cofactor.

It catalyses the reaction D-glyceraldehyde 3-phosphate + pyruvate + H(+) = 1-deoxy-D-xylulose 5-phosphate + CO2. Its pathway is metabolic intermediate biosynthesis; 1-deoxy-D-xylulose 5-phosphate biosynthesis; 1-deoxy-D-xylulose 5-phosphate from D-glyceraldehyde 3-phosphate and pyruvate: step 1/1. Catalyzes the acyloin condensation reaction between C atoms 2 and 3 of pyruvate and glyceraldehyde 3-phosphate to yield 1-deoxy-D-xylulose-5-phosphate (DXP). This Dehalococcoides mccartyi (strain ATCC BAA-2266 / KCTC 15142 / 195) (Dehalococcoides ethenogenes (strain 195)) protein is 1-deoxy-D-xylulose-5-phosphate synthase.